Consider the following 71-residue polypeptide: MKRKIVQNCTNDEFEDVLFDPNLVVVQKEHTSKFTHLTSVYVYEKVGDKQPIYGVFREITEDGTTYWKEIY.

In terms of biological role, plays a role in the processing of a cluster of viral tRNAs. The sequence is that of Protein cef (cef) from Escherichia coli (Bacteriophage T4).